Here is a 414-residue protein sequence, read N- to C-terminus: 2,3-diketo-5-methylthiopentyl-1-phosphate enolase (414 aa).

Lysine 99 functions as the Proton acceptor in the catalytic mechanism. Substrate-binding positions include lysine 148, 174–177, histidine 265, glycine 338, and 360–361; these read KDDE and GG. 3 residues coordinate Mg(2+): lysine 174, aspartate 176, and glutamate 177. Lysine 174 is subject to N6-carboxylysine.

It belongs to the RuBisCO large chain family. Type IV subfamily. In terms of assembly, homodimer. Mg(2+) serves as cofactor.

The enzyme catalyses 5-methylsulfanyl-2,3-dioxopentyl phosphate = 2-hydroxy-5-methylsulfanyl-3-oxopent-1-enyl phosphate. Its pathway is amino-acid biosynthesis; L-methionine biosynthesis via salvage pathway; L-methionine from S-methyl-5-thio-alpha-D-ribose 1-phosphate: step 3/6. Functionally, catalyzes the enolization of 2,3-diketo-5-methylthiopentyl-1-phosphate (DK-MTP-1-P) into 2-hydroxy-3-keto-5-methylthiopentenyl-1-phosphate (HK-MTPenyl-1-P). This Bacillus cereus (strain G9842) protein is 2,3-diketo-5-methylthiopentyl-1-phosphate enolase.